Reading from the N-terminus, the 168-residue chain is uncharacterized protein (168 aa).

The segment at residues 1–21 (MKLLKALAVLSLATISSHSFA) is a signal peptide (or 19).

This is an uncharacterized protein from Haemophilus influenzae (strain ATCC 51907 / DSM 11121 / KW20 / Rd).